Here is a 595-residue protein sequence, read N- to C-terminus: Aspartate--tRNA(Asp/Asn) ligase (595 aa).

Glu-175 is a binding site for L-aspartate. Residues Gln-199–Lys-202 are aspartate. Arg-221 and His-454 together coordinate L-aspartate. Arg-221–Glu-223 provides a ligand contact to ATP. An ATP-binding site is contributed by Glu-488. Residue Arg-495 participates in L-aspartate binding. Gly-540–Arg-543 provides a ligand contact to ATP.

The protein belongs to the class-II aminoacyl-tRNA synthetase family. Type 1 subfamily. In terms of assembly, homodimer.

It localises to the cytoplasm. It carries out the reaction tRNA(Asx) + L-aspartate + ATP = L-aspartyl-tRNA(Asx) + AMP + diphosphate. Its function is as follows. Aspartyl-tRNA synthetase with relaxed tRNA specificity since it is able to aspartylate not only its cognate tRNA(Asp) but also tRNA(Asn). Reaction proceeds in two steps: L-aspartate is first activated by ATP to form Asp-AMP and then transferred to the acceptor end of tRNA(Asp/Asn). In Brucella abortus (strain S19), this protein is Aspartate--tRNA(Asp/Asn) ligase.